The following is a 379-amino-acid chain: S-adenosylmethionine:tRNA ribosyltransferase-isomerase (379 aa).

Positions 35 to 58 (AESRPHAESVPHAESRPHAESAFS) are disordered.

The protein belongs to the QueA family. As to quaternary structure, monomer.

The protein resides in the cytoplasm. It catalyses the reaction 7-aminomethyl-7-carbaguanosine(34) in tRNA + S-adenosyl-L-methionine = epoxyqueuosine(34) in tRNA + adenine + L-methionine + 2 H(+). It functions in the pathway tRNA modification; tRNA-queuosine biosynthesis. In terms of biological role, transfers and isomerizes the ribose moiety from AdoMet to the 7-aminomethyl group of 7-deazaguanine (preQ1-tRNA) to give epoxyqueuosine (oQ-tRNA). In Rhizobium leguminosarum bv. trifolii (strain WSM2304), this protein is S-adenosylmethionine:tRNA ribosyltransferase-isomerase.